The following is a 140-amino-acid chain: MPTINQLVRKGREKKVVKSKSPALNKGYNSFKKIQTNVSSPQKRGVCTRVGTMTPKKPNSALRKYARVRLTNGIEVTAYIPGIGHNLQEHSVVLIRGGRVKDLPGVRYHIIRGALDTAGVANRMQGRSKYGAKKPKESKK.

Asp102 bears the 3-methylthioaspartic acid mark.

The protein belongs to the universal ribosomal protein uS12 family. Part of the 30S ribosomal subunit. Contacts proteins S8 and S17. May interact with IF1 in the 30S initiation complex.

Functionally, with S4 and S5 plays an important role in translational accuracy. Interacts with and stabilizes bases of the 16S rRNA that are involved in tRNA selection in the A site and with the mRNA backbone. Located at the interface of the 30S and 50S subunits, it traverses the body of the 30S subunit contacting proteins on the other side and probably holding the rRNA structure together. The combined cluster of proteins S8, S12 and S17 appears to hold together the shoulder and platform of the 30S subunit. The polypeptide is Small ribosomal subunit protein uS12 (Geobacillus sp. (strain WCH70)).